The chain runs to 414 residues: 3-phosphoshikimate 1-carboxyvinyltransferase (414 aa).

Residues K20, S21, and R25 each contribute to the 3-phosphoshikimate site. K20 serves as a coordination point for phosphoenolpyruvate. Phosphoenolpyruvate contacts are provided by G85 and R113. The 3-phosphoshikimate site is built by S154, S155, Q156, S181, D296, and K323. Q156 contacts phosphoenolpyruvate. D296 functions as the Proton acceptor in the catalytic mechanism. Positions 327, 371, and 395 each coordinate phosphoenolpyruvate.

This sequence belongs to the EPSP synthase family. As to quaternary structure, monomer.

The protein localises to the cytoplasm. It carries out the reaction 3-phosphoshikimate + phosphoenolpyruvate = 5-O-(1-carboxyvinyl)-3-phosphoshikimate + phosphate. Its pathway is metabolic intermediate biosynthesis; chorismate biosynthesis. In terms of biological role, catalyzes the transfer of the enolpyruvyl moiety of phosphoenolpyruvate (PEP) to the 5-hydroxyl of shikimate-3-phosphate (S3P) to produce enolpyruvyl shikimate-3-phosphate and inorganic phosphate. This is 3-phosphoshikimate 1-carboxyvinyltransferase from Saccharolobus islandicus (strain Y.G.57.14 / Yellowstone #1) (Sulfolobus islandicus).